A 385-amino-acid chain; its full sequence is A-type ATP synthase subunit C (385 aa).

Belongs to the V-ATPase V0D/AC39 subunit family. Has multiple subunits with at least A(3), B(3), C, D, E, F, H, I and proteolipid K(x).

The protein resides in the cell membrane. Functionally, component of the A-type ATP synthase that produces ATP from ADP in the presence of a proton gradient across the membrane. The protein is A-type ATP synthase subunit C of Methanothermobacter thermautotrophicus (strain ATCC 29096 / DSM 1053 / JCM 10044 / NBRC 100330 / Delta H) (Methanobacterium thermoautotrophicum).